Reading from the N-terminus, the 473-residue chain is MRIYNTATRQVEEFTTYVPRLARGYVCGITPYDHMHVGHGRVYVFFDIFRRYLERLGYEVRLVINFTDIDDKIINRAKEEFGHEAYKRWREIPERYIAEYFEMTKKLYIKPAYAYPRVTENVEDMVKWISTLVEKGYAYVAPDGSVYFEVAKVPNYGVLSRQKIEELVAGARVEPEPGKRNPLDFALWKSWTPGEPWWDSPWCPGRPGWHLECVVMSTKHLGAPFDFHGGGADLIFPHHENEIAIARAYFGVDNFARYWIHVGYLTVRGEKMSKSLGNIITLREVLSKHSGEALRLAYAMSHYRKPMEFTYELLQQAEDMAKTLYTAYDELSQALRDAGEKDQEPLAQEALKYAEAFYGALDDDMSTPEAVQQLYGMARYIISTVLHKIEKISRETALTILNKYVEMADVLGVLERRQIPKELEEVVKTLVEVRAKLRQERQYQLADYIRQRLAELGVELHDFGPRTYYTYRR.

Cys27 is a Zn(2+) binding site. The 'HIGH' region signature appears at 29–39 (ITPYDHMHVGH). Positions 213, 238, and 242 each coordinate Zn(2+). Positions 271–275 (KMSKS) match the 'KMSKS' region motif. Lys274 is a binding site for ATP.

This sequence belongs to the class-I aminoacyl-tRNA synthetase family. Zn(2+) is required as a cofactor.

The protein localises to the cytoplasm. It catalyses the reaction tRNA(Cys) + L-cysteine + ATP = L-cysteinyl-tRNA(Cys) + AMP + diphosphate. In Pyrobaculum islandicum (strain DSM 4184 / JCM 9189 / GEO3), this protein is Cysteine--tRNA ligase.